Reading from the N-terminus, the 222-residue chain is Peptide methionine sulfoxide reductase MsrA (222 aa).

Residue Cys-60 is part of the active site.

Belongs to the MsrA Met sulfoxide reductase family.

It carries out the reaction L-methionyl-[protein] + [thioredoxin]-disulfide + H2O = L-methionyl-(S)-S-oxide-[protein] + [thioredoxin]-dithiol. It catalyses the reaction [thioredoxin]-disulfide + L-methionine + H2O = L-methionine (S)-S-oxide + [thioredoxin]-dithiol. Its function is as follows. Has an important function as a repair enzyme for proteins that have been inactivated by oxidation. Catalyzes the reversible oxidation-reduction of methionine sulfoxide in proteins to methionine. This chain is Peptide methionine sulfoxide reductase MsrA, found in Pseudomonas putida (strain GB-1).